The following is a 101-amino-acid chain: Small ribosomal subunit protein bS18c (101 aa).

This sequence belongs to the bacterial ribosomal protein bS18 family. As to quaternary structure, part of the 30S ribosomal subunit.

It localises to the plastid. It is found in the chloroplast. This chain is Small ribosomal subunit protein bS18c, found in Populus alba (White poplar).